The primary structure comprises 409 residues: Z-DNA-binding protein 1 (409 aa).

2 consecutive Z-binding domains span residues 8–70 (LGTG…SLGG) and 85–147 (SAAQ…TIYR). Glycyl lysine isopeptide (Lys-Gly) (interchain with G-Cter in ubiquitin) cross-links involve residues Lys17 and Lys43. The tract at residues 59-87 (SSPAPATWSLGGDGASGDGAPEIPEDSAA) is disordered. 2 consecutive short sequence motifs (RIP homotypic interaction motif (RHIM)) follow at residues 183–207 (NSLI…RQTI) and 241–265 (LIHL…LERD). 2 disordered regions span residues 269–307 (HPIF…GGTT) and 323–369 (GNNN…TPSD). Residues 270 to 290 (PIFSFSSSPPESTTTADPETA) show a composition bias toward low complexity. The span at 337–351 (GTKESADSQELKEDT) shows a compositional bias: basic and acidic residues.

Homodimer. Interacts (via RIP homotypic interaction motif) with RIPK3; leading to RIPK3 activation and necroptosis; interaction is enhanced by CASP6. Interacts (via RIP homotypic interaction motif) with RIPK1. Component of the AIM2 PANoptosome complex, a multiprotein complex that drives inflammatory cell death (PANoptosis). Ubiquitinated; polyubiquitinated following influenza A virus (IAV) infection. Post-translationally, phosphorylated.

The protein resides in the cytoplasm. It is found in the nucleus. Its activity is regulated as follows. ZBP1-dependent necroptosis is normally inhibited by RIPK1: RIPK1 inhibits the ZBP1-induced activation of RIPK3 via FADD-mediated recruitment of CASP8, which cleaves RIPK1 and limits TNF-induced necroptosis. Functionally, key innate sensor that recognizes and binds Z-RNA structures, which are produced by a number of viruses, such as herpesvirus, orthomyxovirus or flavivirus, and triggers different forms of cell death. ZBP1 acts as an essential mediator of pyroptosis, necroptosis and apoptosis (PANoptosis), an integral part of host defense against pathogens, by activating RIPK3, caspase-8 (CASP8), and the NLRP3 inflammasome. Key activator of necroptosis, a programmed cell death process in response to death-inducing TNF-alpha family members, via its ability to bind Z-RNA: once activated upon Z-RNA-binding, ZBP1 interacts and stimulates RIPK3 kinase, which phosphorylates and activates MLKL, triggering execution of programmed necrosis. In addition to TNF-induced necroptosis, necroptosis can also take place in the nucleus in response to orthomyxoviruses infection: ZBP1 recognizes and binds Z-RNA structures that are produced in infected nuclei by orthomyxoviruses, such as the influenza A virus (IAV), leading to ZBP1 activation, RIPK3 stimulation and subsequent MLKL phosphorylation, triggering disruption of the nuclear envelope and leakage of cellular DNA into the cytosol. ZBP1-dependent cell death in response to IAV infection promotes interleukin-1 alpha (IL1A) induction in an NLRP3-inflammasome-independent manner: IL1A expression is required for the optimal interleukin-1 beta (IL1B) production, and together, these cytokines promote infiltration of inflammatory neutrophils to the lung, leading to the formation of neutrophil extracellular traps. In addition to its direct role in driving necroptosis via its ability to sense Z-RNAs, also involved in PANoptosis triggered in response to bacterial infection: component of the AIM2 PANoptosome complex, a multiprotein complex that triggers PANoptosis. Also acts as the apical sensor of fungal infection responsible for activating PANoptosis. Involved in CASP8-mediated cell death via its interaction with RIPK1 but independently of its ability to sense Z-RNAs. In some cell types, also able to restrict viral replication by promoting cell death-independent responses. In response to flavivirus infection in neurons, promotes a cell death-independent pathway that restricts viral replication: together with RIPK3, promotes a death-independent transcriptional program that modifies the cellular metabolism via up-regulation expression of the enzyme ACOD1/IRG1 and production of the metabolite itaconate. Itaconate inhibits the activity of succinate dehydrogenase, generating a metabolic state in neurons that suppresses replication of viral genomes. The sequence is that of Z-DNA-binding protein 1 from Rattus norvegicus (Rat).